We begin with the raw amino-acid sequence, 274 residues long: Sulfur carrier protein FdhD (274 aa).

Cys-121 serves as the catalytic Cysteine persulfide intermediate. 258-263 (FSKPGR) contributes to the Mo-bis(molybdopterin guanine dinucleotide) binding site.

It belongs to the FdhD family.

The protein localises to the cytoplasm. Required for formate dehydrogenase (FDH) activity. Acts as a sulfur carrier protein that transfers sulfur from IscS to the molybdenum cofactor prior to its insertion into FDH. The protein is Sulfur carrier protein FdhD of Yersinia pseudotuberculosis serotype O:3 (strain YPIII).